The sequence spans 352 residues: E3 ubiquitin-protein ligase RNF146 (352 aa).

The RING-type zinc-finger motif lies at 36-74 (CAICLQTCVHPVSLPCKHVFCYLCVKGASWLGKRCALCR). Glycyl lysine isopeptide (Lys-Gly) (interchain with G-Cter in ubiquitin) cross-links involve residues Lys-84 and Lys-94. The WWE domain maps to 91 to 167 (EELKAASRGN…EHGRRRKIKR (77 aa)). The a glycoprotein site is built by Tyr-107, Arg-110, and Trp-114. A Glycyl lysine isopeptide (Lys-Gly) (interchain with G-Cter in ubiquitin) cross-link involves residue Lys-130. A glycoprotein-binding residues include Tyr-144, Gln-153, Arg-163, and Lys-175. A Glycyl lysine isopeptide (Lys-Gly) (interchain with G-Cter in ubiquitin) cross-link involves residue Lys-175. Disordered stretches follow at residues 195–242 (SSAD…AGAS), 259–293 (ERSH…ASSD), and 317–352 (NQTV…VTEV). The span at 197–210 (ADGADSGSAHTGAS) shows a compositional bias: low complexity. Residues 215-233 (VPSSTRPLTSVDGQLTSPV) show a composition bias toward polar residues. A compositionally biased stretch (acidic residues) spans 282-293 (STEETESDASSD). Phosphoserine occurs at positions 288 and 292.

Can form homooligomers. Interacts with PARsylated AXIN1, AXIN2, BLZF1, CASC3, H1-2, IPO7, LIG3, NCL, PARP1, XRCC1, XRCC5 and XRCC6. Interacts with DDB1, DHX15, IQGAP1, LRPPRC, PARP2, PRKDC, RUVBL2, TNKS1 and TNKS2. Binding often leads to interactor ubiquitination, in the presence of the appropriate E1 and E2 enzymes, and proteasomal degradation. Post-translationally, ubiquitinated; autoubiquitinated. Autoubiquitination is enhanced upon poly(ADP-ribose)-binding.

It is found in the cytoplasm. The protein localises to the cytosol. It localises to the nucleus. The catalysed reaction is S-ubiquitinyl-[E2 ubiquitin-conjugating enzyme]-L-cysteine + [acceptor protein]-L-lysine = [E2 ubiquitin-conjugating enzyme]-L-cysteine + N(6)-ubiquitinyl-[acceptor protein]-L-lysine.. It participates in protein modification; protein ubiquitination. Functionally, E3 ubiquitin-protein ligase that specifically binds poly-ADP-ribosylated (PARsylated) proteins and mediates their ubiquitination and subsequent degradation. May regulate many important biological processes, such as cell survival and DNA damage response. Acts as an activator of the Wnt signaling pathway by mediating the ubiquitination of PARsylated AXIN1 and AXIN2, 2 key components of the beta-catenin destruction complex. Acts in cooperation with tankyrase proteins (TNKS and TNKS2), which mediate PARsylation of target proteins AXIN1, AXIN2, BLZF1, CASC3, TNKS and TNKS2. Recognizes and binds tankyrase-dependent PARsylated proteins via its WWE domain and mediates their ubiquitination, leading to their degradation. Different ubiquitin linkage types have been observed: TNKS2 undergoes ubiquitination at 'Lys-48' and 'Lys-63', while AXIN1 is only ubiquitinated at 'Lys-48'. May regulate TNKS and TNKS2 subcellular location, preventing aggregation at a centrosomal location. Neuroprotective protein. Protects the brain against N-methyl-D-aspartate (NMDA) receptor-mediated glutamate excitotoxicity and ischemia, by interfering with PAR-induced cell death, called parthanatos. Prevents nuclear translocation of AIFM1 in a PAR-binding dependent manner. Does not affect PARP1 activation. Protects against cell death induced by DNA damaging agents, such as N-methyl-N-nitro-N-nitrosoguanidine (MNNG) and rescues cells from G1 arrest. Promotes cell survival after gamma-irradiation. Facilitates DNA repair. The protein is E3 ubiquitin-protein ligase RNF146 (Rnf146) of Rattus norvegicus (Rat).